A 251-amino-acid polypeptide reads, in one-letter code: Segregation and condensation protein A (251 aa).

The protein belongs to the ScpA family. As to quaternary structure, component of a cohesin-like complex composed of ScpA, ScpB and the Smc homodimer, in which ScpA and ScpB bind to the head domain of Smc. The presence of the three proteins is required for the association of the complex with DNA.

Its subcellular location is the cytoplasm. Its function is as follows. Participates in chromosomal partition during cell division. May act via the formation of a condensin-like complex containing Smc and ScpB that pull DNA away from mid-cell into both cell halves. The chain is Segregation and condensation protein A from Bacillus velezensis (strain DSM 23117 / BGSC 10A6 / LMG 26770 / FZB42) (Bacillus amyloliquefaciens subsp. plantarum).